Reading from the N-terminus, the 247-residue chain is Dihydroorotate dehydrogenase B (NAD(+)), electron transfer subunit (247 aa).

One can recognise an FAD-binding FR-type domain in the interval 2–96; the sequence is RWKMKARVLS…TGPHGNGFEI (95 aa). Residues 49–52, 64–66, and 71–72 contribute to the FAD site; these read RPFS, LYQ, and GT. 4 residues coordinate [2Fe-2S] cluster: C210, C215, C218, and C234.

Belongs to the PyrK family. Heterotetramer of 2 PyrK and 2 PyrD type B subunits. [2Fe-2S] cluster is required as a cofactor. It depends on FAD as a cofactor.

It participates in pyrimidine metabolism; UMP biosynthesis via de novo pathway; orotate from (S)-dihydroorotate (NAD(+) route): step 1/1. In terms of biological role, responsible for channeling the electrons from the oxidation of dihydroorotate from the FMN redox center in the PyrD type B subunit to the ultimate electron acceptor NAD(+). This chain is Dihydroorotate dehydrogenase B (NAD(+)), electron transfer subunit, found in Caldanaerobacter subterraneus subsp. tengcongensis (strain DSM 15242 / JCM 11007 / NBRC 100824 / MB4) (Thermoanaerobacter tengcongensis).